A 391-amino-acid polypeptide reads, in one-letter code: Aspartate carbamoyltransferase 3, chloroplastic (391 aa).

A chloroplast-targeting transit peptide spans 1-69; it reads MTASSSLFSC…SKCDKMIKTR (69 aa). Residues Arg-137 and Thr-138 each coordinate carbamoyl phosphate. UMP contacts are provided by Arg-137 and Thr-138. Residue Lys-167 participates in L-aspartate binding. Residues Arg-188, His-216, and Gln-219 each coordinate carbamoyl phosphate. The UMP site is built by Arg-188 and His-216. The UMP site is built by Arg-249 and Arg-311. Residues Arg-249 and Arg-311 each coordinate L-aspartate. The carbamoyl phosphate site is built by Leu-351 and Pro-352.

It belongs to the aspartate/ornithine carbamoyltransferase superfamily. ATCase family. Homotrimer.

Its subcellular location is the plastid. It localises to the chloroplast. The enzyme catalyses carbamoyl phosphate + L-aspartate = N-carbamoyl-L-aspartate + phosphate + H(+). Its pathway is pyrimidine metabolism; UMP biosynthesis via de novo pathway; (S)-dihydroorotate from bicarbonate: step 2/3. With respect to regulation, feedback inhibited by UMP. Catalyzes the condensation of carbamoyl phosphate and aspartate to form carbamoyl aspartate and inorganic phosphate, the committed step in the de novo pyrimidine nucleotide biosynthesis pathway. The sequence is that of Aspartate carbamoyltransferase 3, chloroplastic (PYRB3) from Pisum sativum (Garden pea).